A 502-amino-acid polypeptide reads, in one-letter code: Chromatin structure-remodeling complex protein RSC58 (502 aa).

One can recognise a Bromo domain in the interval 19 to 134 (SILNAASVKC…KFSSELLLRE (116 aa)). The tract at residues 336–378 (NEEGINRKQNDENNKNVDGKSNGVQDDGGDNDNDATIASANSE) is disordered. A compositionally biased stretch (basic and acidic residues) spans 339-353 (GINRKQNDENNKNVD).

As to quaternary structure, component of the two forms of the RSC complex composed of at least either RSC1 or RSC2, and ARP7, ARP9, LDB7, NPL6, RSC3, RSC30, RSC4, RSC58, RSC6, RSC8, RSC9, SFH1, STH1, HTL1 and probably RTT102. The complexes interact with histone and histone variant components of centromeric chromatin.

It localises to the nucleus. In terms of biological role, component of the chromatin structure-remodeling complex (RSC), which is involved in transcription regulation and nucleosome positioning. RSC is responsible for the transfer of a histone octamer from a nucleosome core particle to naked DNA. The reaction requires ATP and involves an activated RSC-nucleosome intermediate. Remodeling reaction also involves DNA translocation, DNA twist and conformational change. As a reconfigurer of centromeric and flanking nucleosomes, RSC complex is required both for proper kinetochore function in chromosome segregation and, via a PKC1-dependent signaling pathway, for organization of the cellular cytoskeleton. This Saccharomyces cerevisiae (strain ATCC 204508 / S288c) (Baker's yeast) protein is Chromatin structure-remodeling complex protein RSC58 (RSC58).